We begin with the raw amino-acid sequence, 402 residues long: Putative F-box protein At4g22180 (402 aa).

One can recognise an F-box domain in the interval 18 to 64; it reads PNSWSELPLDLLTAVFERLSYANFQRAKSVCSSWHSGSRQSVPIQIP.

The protein is Putative F-box protein At4g22180 of Arabidopsis thaliana (Mouse-ear cress).